Reading from the N-terminus, the 409-residue chain is Argininosuccinate synthase (409 aa).

ATP is bound by residues 11 to 19 (AYSGGLDTS) and Ala-38. L-citrulline-binding residues include Tyr-91 and Ser-96. Gly-121 is a binding site for ATP. Thr-123, Asn-127, and Asp-128 together coordinate L-aspartate. Asn-127 is a binding site for L-citrulline. L-citrulline contacts are provided by Arg-131, Ser-182, Ser-191, Glu-267, and Tyr-279.

The protein belongs to the argininosuccinate synthase family. Type 1 subfamily. Homotetramer.

The protein resides in the cytoplasm. The enzyme catalyses L-citrulline + L-aspartate + ATP = 2-(N(omega)-L-arginino)succinate + AMP + diphosphate + H(+). The protein operates within amino-acid biosynthesis; L-arginine biosynthesis; L-arginine from L-ornithine and carbamoyl phosphate: step 2/3. The sequence is that of Argininosuccinate synthase from Nitrobacter winogradskyi (strain ATCC 25391 / DSM 10237 / CIP 104748 / NCIMB 11846 / Nb-255).